The following is a 45-amino-acid chain: Temporin-SHf (45 aa).

A signal peptide spans 1-10 (FLGTINLSLC). Positions 11-35 (EEERDADEEERRDEPDESNVEVKKR) are excised as a propeptide. A Phenylalanine amide modification is found at Phe43.

The protein belongs to the frog skin active peptide (FSAP) family. Temporin subfamily.

Its subcellular location is the secreted. The protein resides in the target cell membrane. Non-amphipathic alpha-helical antimicrobial peptide with potent activity against some Gram-positive bacteria (including methicillin-resistant Staphylococcus aureus (MRSA)), weak activity against Gram-negative bacteria and no activity against fungi. Permeabilizates membranes through a detergent-like effect probably via the carpet mechanism. More precisely, it strongly and selectively perturbs anionic bilayers membranes by interacting with the polar headgroups and the glycerol backbone region of the phospholipids, hence disrupting the acyl chain packing of the bilayer. Is not active against Leishmania (promastigote and axenic amastigote forms). Does not show hemolytic activity. Does not show toxicity for human THP-1-derived macrophages. The polypeptide is Temporin-SHf (Pelophylax saharicus (Sahara frog)).